Here is a 525-residue protein sequence, read N- to C-terminus: uncharacterized protein (525 aa).

The next 2 membrane-spanning stretches (helical) occupy residues 36 to 56 (AVAA…TLAL) and 61 to 81 (ALPA…AAAI). Residues 173-228 (SAVDIRLERTSADGPQFAHIYCEMTPLRDAEGNLLAIVAQSRDVSEEARLQAEAAA) enclose the PAC domain. Residues 246–466 (AVSHELRTPL…VIVVTIPSDA (221 aa)) form the Histidine kinase domain. Residue His249 is modified to Phosphohistidine; by autocatalysis. A disordered region spans residues 506-525 (LHTGEIGREGGHGAAQAKTA).

Its subcellular location is the cell membrane. It catalyses the reaction ATP + protein L-histidine = ADP + protein N-phospho-L-histidine.. This is an uncharacterized protein from Rhizobium meliloti (strain 1021) (Ensifer meliloti).